Reading from the N-terminus, the 137-residue chain is Phosphomevalonate dehydratase small subunit (137 aa).

Ser62 (proton acceptor) is an active-site residue.

The protein belongs to the AcnX type II small subunit family. As to quaternary structure, heterodimer composed of a large subunit (PMDh-L) and a small subunit (PMDh-S).

It carries out the reaction (R)-5-phosphomevalonate = (2E)-3-methyl-5-phosphooxypent-2-enoate + H2O. The protein operates within isoprenoid biosynthesis; isopentenyl diphosphate biosynthesis via mevalonate pathway. In terms of biological role, component of a hydro-lyase that catalyzes the dehydration of mevalonate 5-phosphate (MVA5P) to form trans-anhydromevalonate 5-phosphate (tAHMP). Involved in the archaeal mevalonate (MVA) pathway, which provides fundamental precursors for isoprenoid biosynthesis, such as isopentenyl diphosphate (IPP) and dimethylallyl diphosphate (DMAPP). This Methanothrix thermoacetophila (strain DSM 6194 / JCM 14653 / NBRC 101360 / PT) (Methanosaeta thermophila) protein is Phosphomevalonate dehydratase small subunit.